The following is a 352-amino-acid chain: Nicotinate-nucleotide--dimethylbenzimidazole phosphoribosyltransferase (352 aa).

The active-site Proton acceptor is the Glu316.

It belongs to the CobT family.

It carries out the reaction 5,6-dimethylbenzimidazole + nicotinate beta-D-ribonucleotide = alpha-ribazole 5'-phosphate + nicotinate + H(+). It functions in the pathway nucleoside biosynthesis; alpha-ribazole biosynthesis; alpha-ribazole from 5,6-dimethylbenzimidazole: step 1/2. Functionally, catalyzes the synthesis of alpha-ribazole-5'-phosphate from nicotinate mononucleotide (NAMN) and 5,6-dimethylbenzimidazole (DMB). The sequence is that of Nicotinate-nucleotide--dimethylbenzimidazole phosphoribosyltransferase from Clostridium acetobutylicum (strain ATCC 824 / DSM 792 / JCM 1419 / IAM 19013 / LMG 5710 / NBRC 13948 / NRRL B-527 / VKM B-1787 / 2291 / W).